We begin with the raw amino-acid sequence, 667 residues long: Trifunctional UDP-glucose 4,6-dehydratase/UDP-4-keto-6-deoxy-D-glucose 3,5-epimerase/UDP-4-keto-L-rhamnose-reductase RHM2 (667 aa).

15–21 is a binding site for NAD(+); that stretch reads GAAGFIA. Residue Thr134 coordinates substrate. Asp135 (proton donor) is an active-site residue. Active-site proton acceptor residues include Glu136 and Tyr161. 389-395 is a binding site for NADP(+); the sequence is GKTGWLG.

In the N-terminal section; belongs to the NAD(P)-dependent epimerase/dehydratase family. dTDP-glucose dehydratase subfamily. This sequence in the C-terminal section; belongs to the dTDP-4-dehydrorhamnose reductase family. Requires NAD(+) as cofactor. NADP(+) is required as a cofactor. In terms of tissue distribution, expressed in roots, stems, leaves, seedlings, inflorescence tips, and siliques.

The enzyme catalyses UDP-alpha-D-glucose = UDP-4-dehydro-6-deoxy-alpha-D-glucose + H2O. Its pathway is carbohydrate biosynthesis. Trifunctional enzyme involved in UDP-beta-L-rhamnose biosynthesis, a precursor of the primary cell wall components rhamnogalacturonan I (RG-I) and rhamnogalacturonan II (RG-II). Catalyzes the dehydration of UDP-glucose to form UDP-4-dehydro-6-deoxy-D-glucose followed by the epimerization of the C3' and C5' positions of UDP-4-dehydro-6-deoxy-D-glucose to form UDP-4-keto-beta-L-rhamnose and the reduction of UDP-4-keto-beta-L-rhamnose to yield UDP-beta-L-rhamnose. Required for the normal seed coat epidermal development. This Arabidopsis thaliana (Mouse-ear cress) protein is Trifunctional UDP-glucose 4,6-dehydratase/UDP-4-keto-6-deoxy-D-glucose 3,5-epimerase/UDP-4-keto-L-rhamnose-reductase RHM2.